Consider the following 204-residue polypeptide: Pyridoxal 5'-phosphate synthase subunit PdxT (204 aa).

Residue Gly52–Ser54 coordinates L-glutamine. The active-site Nucleophile is the Cys84. Residues Arg116 and Ile143 to Arg144 each bind L-glutamine. Catalysis depends on charge relay system residues His184 and Glu186.

The protein belongs to the glutaminase PdxT/SNO family. In terms of assembly, in the presence of PdxS, forms a dodecamer of heterodimers. Only shows activity in the heterodimer.

It carries out the reaction aldehydo-D-ribose 5-phosphate + D-glyceraldehyde 3-phosphate + L-glutamine = pyridoxal 5'-phosphate + L-glutamate + phosphate + 3 H2O + H(+). It catalyses the reaction L-glutamine + H2O = L-glutamate + NH4(+). It participates in cofactor biosynthesis; pyridoxal 5'-phosphate biosynthesis. Catalyzes the hydrolysis of glutamine to glutamate and ammonia as part of the biosynthesis of pyridoxal 5'-phosphate. The resulting ammonia molecule is channeled to the active site of PdxS. This chain is Pyridoxal 5'-phosphate synthase subunit PdxT, found in Pyrobaculum arsenaticum (strain DSM 13514 / JCM 11321 / PZ6).